Reading from the N-terminus, the 562-residue chain is Bifunctional coenzyme A synthase (562 aa).

2 positions are modified to phosphoserine: Ser177 and Ser182. Residues 179–357 form a phosphopantetheine adenylyltransferase region; sequence VARSAKQPVR…HKRPELPPGC (179 aa). In terms of domain architecture, DPCK spans 359 to 562; the sequence is VIGLTGISGS…KRISEAPSDP (204 aa). 364–371 lines the ATP pocket; the sequence is GISGSGKS.

In the central section; belongs to the eukaryotic CoaD family. Monomer. In terms of processing, the N-terminus is blocked.

It is found in the cytoplasm. It localises to the mitochondrion matrix. It catalyses the reaction (R)-4'-phosphopantetheine + ATP + H(+) = 3'-dephospho-CoA + diphosphate. It carries out the reaction 3'-dephospho-CoA + ATP = ADP + CoA + H(+). It functions in the pathway cofactor biosynthesis; coenzyme A biosynthesis; CoA from (R)-pantothenate: step 4/5. The protein operates within cofactor biosynthesis; coenzyme A biosynthesis; CoA from (R)-pantothenate: step 5/5. Its function is as follows. Bifunctional enzyme that catalyzes the fourth and fifth sequential steps of CoA biosynthetic pathway. The fourth reaction is catalyzed by the phosphopantetheine adenylyltransferase, coded by the coaD domain; the fifth reaction is catalyzed by the dephospho-CoA kinase, coded by the coaE domain. May act as a point of CoA biosynthesis regulation. The polypeptide is Bifunctional coenzyme A synthase (Sus scrofa (Pig)).